A 239-amino-acid polypeptide reads, in one-letter code: Acyl-protein thioesterase 1 (239 aa).

Catalysis depends on charge relay system residues Ser-124, Asp-180, and His-213.

It belongs to the AB hydrolase superfamily. AB hydrolase 2 family.

Its subcellular location is the cytoplasm. The protein resides in the nucleus. The enzyme catalyses S-hexadecanoyl-L-cysteinyl-[protein] + H2O = L-cysteinyl-[protein] + hexadecanoate + H(+). In terms of biological role, hydrolyzes fatty acids from S-acylated cysteine residues in proteins with a strong preference for palmitoylated G-alpha proteins over other acyl substrates. Mediates the deacylation of G-alpha proteins such as GPA1 in vivo, but has weak or no activity toward palmitoylated Ras proteins. Has weak lysophospholipase activity in vitro; however such activity may not exist in vivo. This Emericella nidulans (strain FGSC A4 / ATCC 38163 / CBS 112.46 / NRRL 194 / M139) (Aspergillus nidulans) protein is Acyl-protein thioesterase 1.